The primary structure comprises 66 residues: Large ribosomal subunit protein bL33c (66 aa).

Belongs to the bacterial ribosomal protein bL33 family.

It localises to the plastid. The protein localises to the chloroplast. This chain is Large ribosomal subunit protein bL33c, found in Eucalyptus globulus subsp. globulus (Tasmanian blue gum).